Here is a 176-residue protein sequence, read N- to C-terminus: Ribosome maturation factor RimM (176 aa).

Residues Asp93 to Thr170 form the PRC barrel domain.

The protein belongs to the RimM family. As to quaternary structure, binds ribosomal protein uS19.

The protein localises to the cytoplasm. Its function is as follows. An accessory protein needed during the final step in the assembly of 30S ribosomal subunit, possibly for assembly of the head region. Essential for efficient processing of 16S rRNA. May be needed both before and after RbfA during the maturation of 16S rRNA. It has affinity for free ribosomal 30S subunits but not for 70S ribosomes. In Rhodopseudomonas palustris (strain BisB5), this protein is Ribosome maturation factor RimM.